Here is a 102-residue protein sequence, read N- to C-terminus: Protein YcgL (102 aa).

Residues 14–98 form the YcgL domain; sequence MFCVIYRSSK…PPEDLLKQHL (85 aa).

In Salmonella agona (strain SL483), this protein is Protein YcgL.